The primary structure comprises 627 residues: MFNFKLSQQVLKNSTKSIMPILKKPFSTSHAKGDLFKYQSQLPKLPVPTLEETASKYLKTVEPFLNQEQLESTKAKVAEFVRPGGAGEALQARLNNFAADKDNWLAEFWDDYAYMSYRDPVVPYVSYFFSHKDVKNIIGQDQLLKATLIAYYTIEFQEKVLDESLDPEVIKGNPFCMNAFKYMFNNSRVPAEGSDITQHYNGEENQFFVVIYKNNFYKVPTHKNGQRLTKGEIYSYLQEIKNDATPKGLGLGALTSLNRDEWLSAYNNLLKSPINEASLGSIFASSFVIALDSNNPVTIEEKSKNCWHGDGQNRFFDKPLEFFVSANGNSGFLGEHSRMDATPTVQLNNTIYKQILETNPNDLIVEIGSSAPRFGNAEILPFDINPTTRANIKDAIAKFDATIAAHDEEIFQHYGYGKGLIKKFKVSPDAYVQLLMQLAYFKYTGKIRPTYESAATRKFLKGRTETGRTVSNESKKFVETWSDPNASSADKVATFQAAAKQHVAYLSAAADGKGVDRHLFGLKQMIQPGEPIPEIFTDPIFSYSQTWYISSSQVPSEFFQSWGWSQVIDDGFGLAYLINNDWIHVHISCKRGNGLQSDHLKWYLVDSANEMKDVLTKGLLTDAKPKL.

The active-site Proton acceptor is His336. CoA is bound by residues Lys418 and 422 to 429 (KKFKVSPD). Tyr451, Ser453, and Thr464 together coordinate (R)-carnitine. A CoA-binding site is contributed by Gln553. A Microbody targeting signal motif is present at residues 625–627 (PKL).

This sequence belongs to the carnitine/choline acetyltransferase family.

The protein resides in the peroxisome. It localises to the mitochondrion inner membrane. The enzyme catalyses (R)-carnitine + acetyl-CoA = O-acetyl-(R)-carnitine + CoA. Its function is as follows. Carnitine acetylase is specific for short chain fatty acids. Carnitine acetylase seems to affect the flux through the pyruvate dehydrogenase complex. It may be involved as well in the transport of acetyl-CoA into mitochondria. This chain is Carnitine O-acetyltransferase, mitochondrial (CAT2), found in Candida tropicalis (Yeast).